A 448-amino-acid polypeptide reads, in one-letter code: Chromosomal replication initiator protein DnaA 1 (448 aa).

Positions 1-76 (MLTSETQNVW…FLPVDMSGEP (76 aa)) are domain I, interacts with DnaA modulators. Positions 76 to 111 (PAIRFIIAPPQKKIIPPNHFSISSSQKEEQSPNSDV) are domain II. Positions 112–328 (KLNNNYRFEN…GAINRLSAHC (217 aa)) are domain III, AAA+ region. Residues G156, G158, K159, and T160 each coordinate ATP. The tract at residues 329–448 (RLLDLNITEE…IGMVRRNIES (120 aa)) is domain IV, binds dsDNA.

Belongs to the DnaA family. In terms of assembly, oligomerizes as a right-handed, spiral filament on DNA at oriC.

The protein resides in the cytoplasm. Functionally, plays an essential role in the initiation and regulation of chromosomal replication. ATP-DnaA binds to the origin of replication (oriC) to initiate formation of the DNA replication initiation complex once per cell cycle. Binds the DnaA box (a 9 base pair repeat at the origin) and separates the double-stranded (ds)DNA. Forms a right-handed helical filament on oriC DNA; dsDNA binds to the exterior of the filament while single-stranded (ss)DNA is stabiized in the filament's interior. The ATP-DnaA-oriC complex binds and stabilizes one strand of the AT-rich DNA unwinding element (DUE), permitting loading of DNA polymerase. After initiation quickly degrades to an ADP-DnaA complex that is not apt for DNA replication. Binds acidic phospholipids. The polypeptide is Chromosomal replication initiator protein DnaA 1 (Protochlamydia amoebophila (strain UWE25)).